An 80-amino-acid chain; its full sequence is Cytochrome c oxidase subunit 7A1, mitochondrial (80 aa).

The transit peptide at 1 to 21 (MRALRVSQALVRSFSSTARNR) directs the protein to the mitochondrion. Over 22 to 46 (FENRVAEKQKLFQEDNGLPVHLKGG) the chain is Mitochondrial matrix. The chain crosses the membrane as a helical span at residues 47 to 75 (ATDNILYRVTMTLCLGGTLYSLYCLGWAS). Residues 76 to 80 (FPHKK) lie on the Mitochondrial intermembrane side of the membrane.

It belongs to the cytochrome c oxidase VIIa family. In terms of assembly, component of the complex IV (CIV, cytochrome c oxidase), a multisubunit enzyme composed of 14 subunits. The complex is composed of a catalytic core of 3 subunits MT-CO1, MT-CO2 and MT-CO3, encoded in the mitochondrial DNA, and 11 supernumerary subunits COX4I1 (or COX4I2), COX5A, COX5B, COX6A2 (or COX6A1), COX6B1 (or COX6B2), COX6C, COX7A1 (or COX7A2), COX7B, COX7C, COX8B and NDUFA4, which are encoded in the nuclear genome. The complex exists as a monomer or a dimer and forms supercomplexes (SCs) in the inner mitochondrial membrane with NADH-ubiquinone oxidoreductase (complex I, CI) and ubiquinol-cytochrome c oxidoreductase (cytochrome b-c1 complex, complex III, CIII), resulting in different assemblies (supercomplex SCI(1)III(2)IV(1) and megacomplex MCI(2)III(2)IV(2)).

The protein localises to the mitochondrion inner membrane. It participates in energy metabolism; oxidative phosphorylation. Its function is as follows. Component of the mitochondrial respiratory complex IV (CIV, also named cytochrome c oxidase complex), the last enzyme in the mitochondrial electron transport chain which drives oxidative phosphorylation. The CIV complex is the component of the respiratory chain that catalyzes the reduction of oxygen to water. Acts as an assembly factor that specifically drives the homodimerization of CIV complexes, mediating the formation of mitochondrial respiratory supercomplexes (respirasomes) containing two CIV: supercomplxes with two molecules of CIV show improved activity. Despite being highly expressed in brown adipose tissue, not required for thermogenesis. The polypeptide is Cytochrome c oxidase subunit 7A1, mitochondrial (COX7A1) (Bos taurus (Bovine)).